The following is a 196-amino-acid chain: MKRAWQRMLSGRRLDLLDPTPMDIEIEDIAHGLAFVARWNGQTTGDYAYSVAEHSLLVEELFARANPGIGERWRLAALLHDAPEYVLGDMITPVKAAIGKGYVELDDRLTAAVHLRFGLPAVLPAPIKRAIKAADTVSARLEAEQIAGFSEAEADRIFGKPDPVLVRGLAIRLRPPPEVRAAFTARHHVLLRSLSG.

The HD domain maps to 51–164; that stretch reads VAEHSLLVEE…DRIFGKPDPV (114 aa).

This is an uncharacterized protein from Rhodobacter capsulatus (strain ATCC BAA-309 / NBRC 16581 / SB1003).